Here is a 379-residue protein sequence, read N- to C-terminus: Cytochrome b (379 aa).

A run of 4 helical transmembrane segments spans residues 33–53 (FGSL…FLAM), 77–98 (WLIR…YLHI), 113–133 (WNIG…GYVL), and 178–198 (FFAF…VHLL). Heme b is bound by residues His-83 and His-97. Heme b is bound by residues His-182 and His-196. His-201 contributes to the a ubiquinone binding site. 4 consecutive transmembrane segments (helical) span residues 226 to 246 (TKDF…VLFF), 288 to 308 (MGGV…PHIQ), 320 to 340 (ISQF…WIGG), and 347 to 367 (FIII…AFLP).

The protein belongs to the cytochrome b family. The cytochrome bc1 complex contains 11 subunits: 3 respiratory subunits (MT-CYB, CYC1 and UQCRFS1), 2 core proteins (UQCRC1 and UQCRC2) and 6 low-molecular weight proteins (UQCRH/QCR6, UQCRB/QCR7, UQCRQ/QCR8, UQCR10/QCR9, UQCR11/QCR10 and a cleavage product of UQCRFS1). This cytochrome bc1 complex then forms a dimer. It depends on heme b as a cofactor.

Its subcellular location is the mitochondrion inner membrane. In terms of biological role, component of the ubiquinol-cytochrome c reductase complex (complex III or cytochrome b-c1 complex) that is part of the mitochondrial respiratory chain. The b-c1 complex mediates electron transfer from ubiquinol to cytochrome c. Contributes to the generation of a proton gradient across the mitochondrial membrane that is then used for ATP synthesis. This chain is Cytochrome b (MT-CYB), found in Dipodomys ordii (Ord's kangaroo rat).